The chain runs to 135 residues: Succinate dehydrogenase assembly factor 3, mitochondrial (135 aa).

The transit peptide at 1–12 directs the protein to the mitochondrion; it reads MRIFTRLLYAAP.

The protein belongs to the complex I LYR family. SDHAF3 subfamily. In terms of assembly, interacts with the iron-sulfur protein subunit within the SDH catalytic dimer.

It is found in the mitochondrion matrix. Plays an essential role in the assembly of succinate dehydrogenase (SDH), an enzyme complex (also referred to as respiratory complex II) that is a component of both the tricarboxylic acid (TCA) cycle and the mitochondrial electron transport chain, and which couples the oxidation of succinate to fumarate with the reduction of ubiquinone (coenzyme Q) to ubiquinol. Promotes maturation of the iron-sulfur protein subunit of the SDH catalytic dimer, protecting it from the deleterious effects of oxidants. May act together with SDHAF1. In Emericella nidulans (strain FGSC A4 / ATCC 38163 / CBS 112.46 / NRRL 194 / M139) (Aspergillus nidulans), this protein is Succinate dehydrogenase assembly factor 3, mitochondrial.